Reading from the N-terminus, the 645-residue chain is Exoribonuclease 2 (645 aa).

The region spanning 191 to 517 (REDLTELNFI…MNHRLLKALI (327 aa)) is the RNB domain. The 83-residue stretch at 563 to 645 (HIRYSAEIID…DNRSIIAKIV (83 aa)) folds into the S1 motif domain.

The protein belongs to the RNR ribonuclease family. RNase II subfamily.

Its subcellular location is the cytoplasm. It carries out the reaction Exonucleolytic cleavage in the 3'- to 5'-direction to yield nucleoside 5'-phosphates.. Functionally, involved in mRNA degradation. Hydrolyzes single-stranded polyribonucleotides processively in the 3' to 5' direction. In Baumannia cicadellinicola subsp. Homalodisca coagulata, this protein is Exoribonuclease 2.